The sequence spans 217 residues: Outer-membrane lipoprotein LolB (217 aa).

Residues 1–20 (MSKALRTLALSGLVLVGLSA) form the signal peptide. Cys21 is lipidated: N-palmitoyl cysteine. Residue Cys21 is the site of S-diacylglycerol cysteine attachment.

Belongs to the LolB family. Monomer.

It localises to the cell outer membrane. In terms of biological role, plays a critical role in the incorporation of lipoproteins in the outer membrane after they are released by the LolA protein. The protein is Outer-membrane lipoprotein LolB of Xanthomonas oryzae pv. oryzae (strain MAFF 311018).